Consider the following 695-residue polypeptide: Putative ATP-dependent DNA helicase R568 (695 aa).

Positions 86 to 499 (KFSEEQIKYI…FRNEEIFDSN (414 aa)) constitute a UvrD-like helicase ATP-binding domain. 107–114 (ACAGSGKT) lines the ATP pocket.

It belongs to the helicase family. UvrD subfamily.

It carries out the reaction Couples ATP hydrolysis with the unwinding of duplex DNA by translocating in the 3'-5' direction.. The enzyme catalyses ATP + H2O = ADP + phosphate + H(+). Its function is as follows. ATP-dependent DNA helicase. In Acanthamoeba polyphaga mimivirus (APMV), this protein is Putative ATP-dependent DNA helicase R568.